A 401-amino-acid chain; its full sequence is Tyrosine--tRNA ligase (401 aa).

Residues 42–51 carry the 'HIGH' region motif; the sequence is PTAPDLHLGH. Positions 226 to 230 match the 'KMSKS' region motif; that stretch reads KMSKS. Lys-229 serves as a coordination point for ATP. The S4 RNA-binding domain occupies 336–397; the sequence is IALAQLLKQI…GKRRIAKLSI (62 aa).

This sequence belongs to the class-I aminoacyl-tRNA synthetase family. TyrS type 2 subfamily. As to quaternary structure, homodimer.

It is found in the cytoplasm. The enzyme catalyses tRNA(Tyr) + L-tyrosine + ATP = L-tyrosyl-tRNA(Tyr) + AMP + diphosphate + H(+). Functionally, catalyzes the attachment of tyrosine to tRNA(Tyr) in a two-step reaction: tyrosine is first activated by ATP to form Tyr-AMP and then transferred to the acceptor end of tRNA(Tyr). The sequence is that of Tyrosine--tRNA ligase from Legionella pneumophila (strain Lens).